We begin with the raw amino-acid sequence, 346 residues long: SUMO-activating enzyme subunit 1 (346 aa).

Methionine 1 is subject to N-acetylmethionine. Position 2 is an N-acetylvaline; in SUMO-activating enzyme subunit 1, N-terminally processed (valine 2). Serine 12 bears the Phosphoserine mark. Lysine 198 bears the N6-acetyllysine mark.

The protein belongs to the ubiquitin-activating E1 family. In terms of assembly, heterodimer of SAE1 and UBA2/SAE2. The heterodimer corresponds to the two domains that are encoded on a single polypeptide chain in ubiquitin-activating enzyme E1. Interacts with UBE2I.

Its subcellular location is the nucleus. It participates in protein modification; protein sumoylation. Functionally, the heterodimer acts as an E1 ligase for SUMO1, SUMO2, SUMO3, and probably SUMO4. It mediates ATP-dependent activation of SUMO proteins followed by formation of a thioester bond between a SUMO protein and a conserved active site cysteine residue on UBA2/SAE2. The sequence is that of SUMO-activating enzyme subunit 1 (SAE1) from Bos taurus (Bovine).